The chain runs to 149 residues: Calmodulin (149 aa).

At A2 the chain carries N-acetylalanine. EF-hand domains are found at residues 8 to 43 (EQIA…LGQN), 44 to 79 (PTEA…KMKD), 81 to 116 (DSEE…LGEK), and 117 to 149 (LTDE…MTAK). Ca(2+)-binding residues include D21, D23, D25, T27, E32, D57, D59, N61, T63, E68, D94, D96, N98, Y100, and E105. The residue at position 116 (K116) is an N6,N6,N6-trimethyllysine. Residues D130, D132, D134, Q136, and E141 each contribute to the Ca(2+) site.

Belongs to the calmodulin family.

Functionally, calmodulin acts as part of a calcium signal transduction pathway by mediating the control of a large number of enzymes, ion channels, aquaporins and other proteins through calcium-binding. Calcium-binding is required for the activation of calmodulin. Among the enzymes to be stimulated by the calmodulin-calcium complex are a number of protein kinases, such as myosin light-chain kinases and calmodulin-dependent protein kinase type II (CaMK2), and phosphatases. This chain is Calmodulin (calm), found in Epinephelus akaara (Hong Kong grouper).